Consider the following 107-residue polypeptide: ATP-dependent Clp protease adapter protein ClpS (107 aa).

A compositionally biased stretch (basic and acidic residues) spans 1–12 (MSGDKDFDKDSD). The tract at residues 1 to 21 (MSGDKDFDKDSDVTVITRTTP) is disordered.

It belongs to the ClpS family. Binds to the N-terminal domain of the chaperone ClpA.

Its function is as follows. Involved in the modulation of the specificity of the ClpAP-mediated ATP-dependent protein degradation. In Zymomonas mobilis subsp. mobilis (strain ATCC 31821 / ZM4 / CP4), this protein is ATP-dependent Clp protease adapter protein ClpS.